The chain runs to 655 residues: Peroxidase skpo-1 (655 aa).

The N-terminal stretch at methionine 1 to serine 19 is a signal peptide. One can recognise a ShKT domain in the interval cysteine 22–cysteine 56. 4 disulfides stabilise this stretch: cysteine 22/cysteine 56, cysteine 29/cysteine 49, cysteine 38/cysteine 53, and cysteine 133/cysteine 150. Histidine 222 (proton acceptor) is an active-site residue. Histidine 428 lines the heme b pocket. 2 cysteine pairs are disulfide-bonded: cysteine 520/cysteine 576 and cysteine 617/cysteine 642.

It belongs to the peroxidase family. XPO subfamily. Requires heme b as cofactor. In terms of tissue distribution, exclusively expressed in hypodermis.

It carries out the reaction 2 a phenolic donor + H2O2 = 2 a phenolic radical donor + 2 H2O. In terms of biological role, involved in hypodermal immune response against some types of bacterial infection. Probably utilizes H(2)O(2) produced by the NADPH oxidase bli-3. May play a role in cuticule biosynthesis. The polypeptide is Peroxidase skpo-1 (Caenorhabditis elegans).